Reading from the N-terminus, the 192-residue chain is Peptidyl-tRNA hydrolase (192 aa).

Residue tyrosine 18 coordinates tRNA. Histidine 23 (proton acceptor) is an active-site residue. TRNA-binding residues include phenylalanine 69, asparagine 71, and asparagine 117.

This sequence belongs to the PTH family. As to quaternary structure, monomer.

The protein resides in the cytoplasm. It catalyses the reaction an N-acyl-L-alpha-aminoacyl-tRNA + H2O = an N-acyl-L-amino acid + a tRNA + H(+). Functionally, hydrolyzes ribosome-free peptidyl-tRNAs (with 1 or more amino acids incorporated), which drop off the ribosome during protein synthesis, or as a result of ribosome stalling. Its function is as follows. Catalyzes the release of premature peptidyl moieties from peptidyl-tRNA molecules trapped in stalled 50S ribosomal subunits, and thus maintains levels of free tRNAs and 50S ribosomes. The protein is Peptidyl-tRNA hydrolase of Neisseria meningitidis serogroup A / serotype 4A (strain DSM 15465 / Z2491).